Here is a 92-residue protein sequence, read N- to C-terminus: uncharacterized protein (92 aa).

This is an uncharacterized protein from Methanocaldococcus jannaschii (strain ATCC 43067 / DSM 2661 / JAL-1 / JCM 10045 / NBRC 100440) (Methanococcus jannaschii).